A 300-amino-acid polypeptide reads, in one-letter code: E3 ubiquitin-protein ligase RNF212B (300 aa).

The RING-type zinc-finger motif lies at 6–40 (CNQCFRKDGAHFFVTSCGHIFCKKCVTLEKCAVCG). A coiled-coil region spans residues 88-124 (LIAFYKHRITKLETAMQETQQALVSQDKELSVLRKEN). 2 disordered regions span residues 141–251 (YQGS…HTRV) and 280–300 (PYQQ…TTSR). Residues 155–169 (TSPSQSVTPRPSFQH) show a composition bias toward polar residues. Residues 170-183 (SSQVVSRSSSVESV) are compositionally biased toward low complexity. Positions 191-200 (GSLGQGGRGL) are enriched in gly residues. Residues 211 to 234 (NETPSPASTHSLSYRPSSASSGQG) show a composition bias toward polar residues.

Homodimer. In terms of processing, autoubiquitinated.

It is found in the chromosome. It catalyses the reaction S-ubiquitinyl-[E2 ubiquitin-conjugating enzyme]-L-cysteine + [acceptor protein]-L-lysine = [E2 ubiquitin-conjugating enzyme]-L-cysteine + N(6)-ubiquitinyl-[acceptor protein]-L-lysine.. It functions in the pathway protein modification; protein ubiquitination. Ubiquitin E3 ligase that acts as a crucial factor for crossing-over (CO) formation during meiosis. Essential for normal prophase I progression and for ensuring appropriate CO designation in meiosis. Recruits key components of the cross-over machinery either directly ou indirectly, leading to the activation of the MutL-gamma complex. The function of RNF212B in CO designation is dependent on its catalytic activity. This chain is E3 ubiquitin-protein ligase RNF212B (RNF212B), found in Pongo abelii (Sumatran orangutan).